Consider the following 550-residue polypeptide: Arginine--tRNA ligase (550 aa).

The 'HIGH' region signature appears at 122 to 132; it reads GNPTGPLHLAH.

Belongs to the class-I aminoacyl-tRNA synthetase family. In terms of assembly, monomer.

The protein localises to the cytoplasm. The catalysed reaction is tRNA(Arg) + L-arginine + ATP = L-arginyl-tRNA(Arg) + AMP + diphosphate. The polypeptide is Arginine--tRNA ligase (Tropheryma whipplei (strain TW08/27) (Whipple's bacillus)).